We begin with the raw amino-acid sequence, 206 residues long: Small ribosomal subunit protein uS5 (206 aa).

Positions 1–23 (MTDTPTKQENQSKTENPPSSNAN) are enriched in polar residues. Residues 1–52 (MTDTPTKQENQSKTENPPSSNANEQRRGNRNNDRKRNRRGDSKNERDSEWQE) form a disordered region. Basic and acidic residues predominate over residues 24-52 (EQRRGNRNNDRKRNRRGDSKNERDSEWQE). The region spanning 50 to 113 (WQERVVQIRR…SDGKKHLVRV (64 aa)) is the S5 DRBM domain.

This sequence belongs to the universal ribosomal protein uS5 family. Part of the 30S ribosomal subunit. Contacts proteins S4 and S8.

Functionally, with S4 and S12 plays an important role in translational accuracy. Located at the back of the 30S subunit body where it stabilizes the conformation of the head with respect to the body. This is Small ribosomal subunit protein uS5 from Prochlorococcus marinus subsp. pastoris (strain CCMP1986 / NIES-2087 / MED4).